We begin with the raw amino-acid sequence, 2626 residues long: Unconventional myosin-IXa (2626 aa).

The region spanning 14 to 112 is the Ras-associating domain; the sequence is NEHTLRIYPG…YRFLLREKNL (99 aa). Residues 146-1017 form the Myosin motor domain; sequence KDFDDLCSLP…ERQHLQDLLH (872 aa). A helical membrane pass occupies residues 175–195; sequence IYTYVGSILIAINPFKFLPIY. 239-246 provides a ligand contact to ATP; the sequence is GESGSGKT. S755 is modified (phosphoserine). Residues 908 to 919 form an actin-binding region; the sequence is QAEPYFVKCIRS. 5 consecutive IQ domains span residues 1021–1041, 1043–1072, 1075–1104, 1116–1145, and 1139–1168; these read LRRIILLQRWFRVLLSRQQFL, LRQASVIIQRFWRNYLNQKQVRNAAVEKDA, MASAASLLQASWRAHLERQRYLELRAAAVI, RHRAATCIQSRWRGYRQSKKYKEQRNKIIL, and QRNKIILLQSIYRGFRARQRYKALKEERLK. Residues 1022–1163 are neck or regulatory domain; sequence RRIILLQRWF…RARQRYKALK (142 aa). The segment at 1164 to 2589 is tail; the sequence is EERLKETKLE…LKNVKNSPQK (1426 aa). Positions 1221–1240 are enriched in basic and acidic residues; sequence RESSMDFSKESPDKQQERGR. The interval 1221-1276 is disordered; the sequence is RESSMDFSKESPDKQQERGRSQSGTDLQGDVIVRQRPKSLEDLHQKKVGRAKRESR. S1243 carries the post-translational modification Phosphoserine. At T1245 the chain carries Phosphothreonine. S1259 is subject to Phosphoserine. The stretch at 1265-1292 forms a coiled coil; the sequence is QKKVGRAKRESRRMRELEQAIFSLELLK. Residues 1266-1276 are compositionally biased toward basic residues; it reads KKVGRAKRESR. A phosphoserine mark is found at S1300 and S1318. Positions 1360-1375 are enriched in polar residues; it reads PSTFTNPKFDSQNNAL. Positions 1360–1397 are disordered; that stretch reads PSTFTNPKFDSQNNALSASSETSSTFSGKGASSDSEHL. A compositionally biased stretch (low complexity) spans 1376 to 1386; sequence SASSETSSTFS. Residues 1493–1540 adopt a coiled-coil conformation; sequence TVLKKLEKLNIEKEKRQKQLQQQNEKEMMEQIRQQTDILEKERKAFKT. Disordered stretches follow at residues 1562-1602, 1618-1673, 1689-1726, 1765-1784, and 1872-1907; these read VERP…PPKD, SRTV…SRPI, GNPQVHKQDEPAWKSKLAGPGQREVARPAHKKKARMAR, SELGPVSSLGQASHSDSEMT, and QYHPTPPLSPELPGSCRKEFKENKEPSPKAKRKRGV. Composition is skewed to basic and acidic residues over residues 1620 to 1632 and 1659 to 1669; these read TVKELTKTERMGT and HRSDDPSREGS. Over residues 1716–1726 the composition is skewed to basic residues; it reads PAHKKKARMAR. Polar residues predominate over residues 1772 to 1784; the sequence is SLGQASHSDSEMT. The span at 1887–1899 shows a compositional bias: basic and acidic residues; that stretch reads CRKEFKENKEPSP. S2016 is modified (phosphoserine). The Phorbol-ester/DAG-type zinc finger occupies 2067–2116; the sequence is GHMFKATQYSIPTYCEYCSSLIWIMDRASVCKLCKYACHKKCCLKTTAKC. One can recognise a Rho-GAP domain in the interval 2131–2319; sequence VELSRLTSED…LIVVEQMNKY (189 aa). A disordered region spans residues 2365–2385; the sequence is SGKGRLHRGSHPNPSSPVIVR. S2380 carries the phosphoserine modification. Residues 2408–2444 are a coiled coil; the sequence is TDQQQAAMQQEEKVLTEQIENLQKEKEELTFEMLVLE. Residues 2449 to 2527 form a disordered region; it reads DDEALESEAS…NTTSSHGTRK (79 aa). Over residues 2504–2522 the composition is skewed to low complexity; the sequence is SLDSVSSSVSSCLSNTTSS. S2542 bears the Phosphoserine mark. Residues 2552–2614 form a disordered region; that stretch reads PLGQAKSLED…TVDSDCSSTQ (63 aa).

This sequence belongs to the TRAFAC class myosin-kinesin ATPase superfamily. Myosin family. Post-translationally, phosphorylated by ALPK1 following monosodium urate monohydrate (MSU)-induced inflammation. In terms of tissue distribution, expressed at high levels in brain, followed by testis and spleen. Expressed at very low levels, in kidney. Detected abundantly in brain and testis and at lower levels in adrenal gland, kidney, lung and spleen (at protein level). In adrenal gland it is mostly found in the medulla but not in the cortex. In brain, it is found in the cerebellum and the CA2-CA3 regions of the hippocampus.

It localises to the membrane. The protein localises to the cytoplasm. The protein resides in the synapse. Its subcellular location is the cell projection. It is found in the growth cone. Functionally, myosins are actin-based motor molecules with ATPase activity. Unconventional myosins serve in intracellular movements. Regulates Rho by stimulating it's GTPase activity in neurons. Required for the regulation of neurite branching and motor neuron axon guidance. The protein is Unconventional myosin-IXa (Myo9a) of Rattus norvegicus (Rat).